A 565-amino-acid chain; its full sequence is Urocanate hydratase (565 aa).

NAD(+)-binding positions include Gly61–Gly62, Gln139, Gly185–Gly187, Glu205, Arg210, Asn251–Ala252, Gln272–His276, Tyr282–Leu283, and Tyr331. Cys419 is an active-site residue. The tract at residues Leu453 to Ser472 is disordered. Residues Arg463–Ser472 are compositionally biased toward basic and acidic residues. Residue Gly501 coordinates NAD(+).

The protein belongs to the urocanase family. It depends on NAD(+) as a cofactor.

It localises to the cytoplasm. The enzyme catalyses 4-imidazolone-5-propanoate = trans-urocanate + H2O. The protein operates within amino-acid degradation; L-histidine degradation into L-glutamate; N-formimidoyl-L-glutamate from L-histidine: step 2/3. In terms of biological role, catalyzes the conversion of urocanate to 4-imidazolone-5-propionate. The protein is Urocanate hydratase of Pseudomonas syringae pv. syringae (strain B728a).